Consider the following 145-residue polypeptide: uncharacterized protein (145 aa).

The ACT domain maps to 78-145 (KLQIVAKDRI…DVVEKISILW (68 aa)).

This is an uncharacterized protein from Methanocaldococcus jannaschii (strain ATCC 43067 / DSM 2661 / JAL-1 / JCM 10045 / NBRC 100440) (Methanococcus jannaschii).